The sequence spans 426 residues: Glutamate-1-semialdehyde 2,1-aminomutase (426 aa).

The residue at position 265 (Lys-265) is an N6-(pyridoxal phosphate)lysine.

This sequence belongs to the class-III pyridoxal-phosphate-dependent aminotransferase family. HemL subfamily. As to quaternary structure, homodimer. Pyridoxal 5'-phosphate is required as a cofactor.

It is found in the cytoplasm. It catalyses the reaction (S)-4-amino-5-oxopentanoate = 5-aminolevulinate. It functions in the pathway porphyrin-containing compound metabolism; protoporphyrin-IX biosynthesis; 5-aminolevulinate from L-glutamyl-tRNA(Glu): step 2/2. This chain is Glutamate-1-semialdehyde 2,1-aminomutase, found in Salmonella arizonae (strain ATCC BAA-731 / CDC346-86 / RSK2980).